A 451-amino-acid chain; its full sequence is Medium-chain fatty acid ethyl ester synthase/esterase 2 (451 aa).

Residue Lys-114 forms a Glycyl lysine isopeptide (Lys-Gly) (interchain with G-Cter in ubiquitin) linkage. In terms of domain architecture, AB hydrolase-1 spans 166–430; that stretch reads PLVVILHGLA…GGHLAYLDKD (265 aa). Residues Ser-247, Asp-395, and His-423 each act as charge relay system in the active site.

It belongs to the AB hydrolase superfamily. AB hydrolase 4 family.

It catalyses the reaction an aliphatic alcohol + acetyl-CoA = an acetyl ester + CoA. Functionally, displays enzymatic activity both for medium-chain fatty acid (MCFA) ethyl ester synthesis and hydrolysis (esterase activity). MCFA are toxic for yeast and this enzyme could thus be involved in their detoxification by esterification. The protein is Medium-chain fatty acid ethyl ester synthase/esterase 2 (EHT1) of Saccharomyces cerevisiae (strain ATCC 204508 / S288c) (Baker's yeast).